We begin with the raw amino-acid sequence, 210 residues long: Thymidylate kinase (210 aa).

10 to 17 serves as a coordination point for ATP; the sequence is GPEGAGKS.

It belongs to the thymidylate kinase family.

The catalysed reaction is dTMP + ATP = dTDP + ADP. Functionally, phosphorylation of dTMP to form dTDP in both de novo and salvage pathways of dTTP synthesis. In Pseudomonas aeruginosa (strain LESB58), this protein is Thymidylate kinase.